A 178-amino-acid chain; its full sequence is Protein Vhl (178 aa).

This sequence belongs to the VHL family. As to quaternary structure, part of a complex with Cul2, Roc1a/Rbx1 and the elongin BC complex. Interacts with sima/Hif1a. Interacts with itself. Interacts with mgr and betaTub56D/tubulin beta-1 chain. Interacts with tubulin alpha-beta heterodimers by itself or in complex with mgr. Interacts with microtubules (MTs).

The protein operates within protein modification; protein ubiquitination. Involved in development of tracheal vasculature. Probably involved in halting cell migration at the end of vascular tube outgrowth. Possesses E3 ubiquitin ligase activity when in complex with Elongin BC complex, Cul2 and Rox1a/Rbx1, and can target sima/Hif1a for ubiquitination. May play a critical role in promoting microtubule stabilization when tubulins are correctly folded by the prefoldin complex. If tubulin is incorrectly folded, may promote its degradation. This Drosophila melanogaster (Fruit fly) protein is Protein Vhl.